The following is a 314-amino-acid chain: Acetylglutamate kinase (314 aa).

Residues 76-77, arginine 98, and asparagine 199 each bind substrate; that span reads GG.

The protein belongs to the acetylglutamate kinase family. ArgB subfamily.

Its subcellular location is the cytoplasm. The enzyme catalyses N-acetyl-L-glutamate + ATP = N-acetyl-L-glutamyl 5-phosphate + ADP. Its pathway is amino-acid biosynthesis; L-arginine biosynthesis; N(2)-acetyl-L-ornithine from L-glutamate: step 2/4. In terms of biological role, catalyzes the ATP-dependent phosphorylation of N-acetyl-L-glutamate. The sequence is that of Acetylglutamate kinase from Bifidobacterium longum (strain DJO10A).